Here is a 492-residue protein sequence, read N- to C-terminus: Cobyric acid synthase (492 aa).

The GATase cobBQ-type domain occupies 259-453 (HTTVAVVAYP…LHGLFEDAVA (195 aa)). Residue C340 is the Nucleophile of the active site. H445 is a catalytic residue.

Belongs to the CobB/CobQ family. CobQ subfamily.

It functions in the pathway cofactor biosynthesis; adenosylcobalamin biosynthesis. Functionally, catalyzes amidations at positions B, D, E, and G on adenosylcobyrinic A,C-diamide. NH(2) groups are provided by glutamine, and one molecule of ATP is hydrogenolyzed for each amidation. The protein is Cobyric acid synthase of Paracidovorax citrulli (strain AAC00-1) (Acidovorax citrulli).